Consider the following 477-residue polypeptide: Delayed-rectifier potassium channel regulatory subunit KCNS2 (477 aa).

Residues 1 to 184 (MTRQSLWDVS…LALDNPGYSV (184 aa)) lie on the Cytoplasmic side of the membrane. Residues 185-206 (LSRVFSVLSILVVLGSIITMCL) traverse the membrane as a helical segment. Residues 207 to 225 (NSLPDFQIPDSQGNPGEDP) are Extracellular-facing. A helical transmembrane segment spans residues 226 to 248 (RFEIVEHFGIAWFTFELVARFAV). Residues 249–259 (APDFLKFFKNA) lie on the Cytoplasmic side of the membrane. The chain crosses the membrane as a helical span at residues 260–280 (LNLIDLMSIVPFYITLVVNLV). Topologically, residues 281-290 (VESSPTLANL) are extracellular. A helical; Voltage-sensor membrane pass occupies residues 291 to 311 (GRVAQVLRLMRIFRILKLARH). Residues 312-326 (STGLRSLGATLKYSY) lie on the Cytoplasmic side of the membrane. Residues 327 to 348 (KEVGLLLLYLSVGISIFSVVAY) traverse the membrane as a helical segment. The Extracellular portion of the chain corresponds to 349 to 361 (TIEKEENEGLATI). Residues 362 to 373 (PACWWWATVSMT) constitute an intramembrane region (helical). Residues 374 to 379 (TVGYGD) carry the Selectivity filter motif. Residues 374 to 381 (TVGYGDVV) lie within the membrane without spanning it. Topologically, residues 382–388 (PGTTAGK) are extracellular. Residues 389 to 417 (LTASACILAGILVVVLPITLIFNKFSHFY) form a helical membrane-spanning segment. Over 418–477 (RRQKQLESAMRSCDFGDGMKEVPSVNLRDYYAHKVKSLMASLTNMSRSSPSELSLDDSLH) the chain is Cytoplasmic.

The protein belongs to the potassium channel family. S (TC 1.A.1.2) subfamily. Kv9.2/KCNS2 sub-subfamily. In terms of assembly, heterotetramer with KCNB1 and KCNB2. Does not form homomultimers. As to expression, detected in brain, but not in the other tissues tested. Expression was highest in the olfactory bulb, cerebral cortex, hippocampus, habenula, basolateral amygdaloid nuclei and cerebellum.

The protein localises to the cell membrane. Potassium channel regulatory subunit that modulate the delayed rectifier voltage-gated potassium channel activity of KCNB1 and KCNB2 by altering their kinetics, expression levels, and shifting the half-inactivation potential to more polarized values. While it does not form functional channels on its own, it can form functional heterotetrameric channels with KCNB1 and KCNB2. Each regulatory subunit has unique regulatory properties that can lead to extensive inhibition, significant changes in kinetics, and/or substantial shifts in the voltage dependencies of the inactivation process. This Mus musculus (Mouse) protein is Delayed-rectifier potassium channel regulatory subunit KCNS2.